The following is an 84-amino-acid chain: MSEDEKLPQVIMDPADYEALKKRLDELEKKVENTNAELFQLAGKKVGRDIGILYGLVIGIILSYILPALIKIIQILSLKVLVQQ.

The chain crosses the membrane as a helical span at residues 50 to 70; sequence IGILYGLVIGIILSYILPALI.

Belongs to the MtrG family. As to quaternary structure, the complex is composed of 8 subunits; MtrA, MtrB, MtrC, MtrD, MtrE, MtrF, MtrG and MtrH.

Its subcellular location is the cell membrane. It carries out the reaction 5-methyl-5,6,7,8-tetrahydromethanopterin + coenzyme M + 2 Na(+)(in) = 5,6,7,8-tetrahydromethanopterin + methyl-coenzyme M + 2 Na(+)(out). It functions in the pathway one-carbon metabolism; methanogenesis from CO(2); methyl-coenzyme M from 5,10-methylene-5,6,7,8-tetrahydromethanopterin: step 2/2. Functionally, part of a complex that catalyzes the formation of methyl-coenzyme M and tetrahydromethanopterin from coenzyme M and methyl-tetrahydromethanopterin. This is an energy-conserving, sodium-ion translocating step. The sequence is that of Tetrahydromethanopterin S-methyltransferase subunit G from Methanocaldococcus jannaschii (strain ATCC 43067 / DSM 2661 / JAL-1 / JCM 10045 / NBRC 100440) (Methanococcus jannaschii).